We begin with the raw amino-acid sequence, 150 residues long: L-alanine exporter AlaE (150 aa).

4 helical membrane passes run 17-37 (FAMV…VSGM), 48-68 (LSIP…DYVL), 86-106 (LVAY…TVGA), and 111-131 (IITA…LYGY).

This sequence belongs to the AlaE exporter family.

The protein resides in the cell inner membrane. Functionally, exports L-alanine. The chain is L-alanine exporter AlaE from Vibrio cholerae serotype O1 (strain ATCC 39315 / El Tor Inaba N16961).